The following is a 174-amino-acid chain: MSTNSDNDKIFQEVQKFVKNYDLNKDGSVTSFDIYRSFLKKMDGDIFKASQAAGVLCSTVDMDHDGKFTYQEIAKYCADEAKKNVEQNAEIAALADVEAMLLRFDKDKDKKLTKTEFVEYFKGNGHTPYSDRDQVLKIIDLDKDGCVSANELQEWFKKRRIDYARMVSARGPNC.

4 EF-hand domains span residues 9–44 (KIFQ…KMDG), 60–83 (VDMD…EAKK), 92–127 (AALA…NGHT), and 133–162 (DQVL…RRID). The Ca(2+) site is built by D22, N24, D26, S28, and D33. Residues D105, D107, D109, K111, E116, D140, D142, D144, C146, and E151 each coordinate Ca(2+).

The polypeptide is Calcium-binding protein F (cbpF) (Dictyostelium discoideum (Social amoeba)).